Consider the following 187-residue polypeptide: ATP synthase subunit b (187 aa).

Residues 32 to 52 form a helical membrane-spanning segment; sequence NILDTNLINLAIIITVLFVFG.

It belongs to the ATPase B chain family. As to quaternary structure, F-type ATPases have 2 components, F(1) - the catalytic core - and F(0) - the membrane proton channel. F(1) has five subunits: alpha(3), beta(3), gamma(1), delta(1), epsilon(1). F(0) has four main subunits: a(1), b(1), b'(1) and c(10-14). The alpha and beta chains form an alternating ring which encloses part of the gamma chain. F(1) is attached to F(0) by a central stalk formed by the gamma and epsilon chains, while a peripheral stalk is formed by the delta, b and b' chains.

The protein localises to the cellular thylakoid membrane. F(1)F(0) ATP synthase produces ATP from ADP in the presence of a proton or sodium gradient. F-type ATPases consist of two structural domains, F(1) containing the extramembraneous catalytic core and F(0) containing the membrane proton channel, linked together by a central stalk and a peripheral stalk. During catalysis, ATP synthesis in the catalytic domain of F(1) is coupled via a rotary mechanism of the central stalk subunits to proton translocation. Its function is as follows. Component of the F(0) channel, it forms part of the peripheral stalk, linking F(1) to F(0). The protein is ATP synthase subunit b of Trichormus variabilis (strain ATCC 29413 / PCC 7937) (Anabaena variabilis).